A 593-amino-acid chain; its full sequence is Aspartate--tRNA(Asp/Asn) ligase (593 aa).

Residue glutamate 175 participates in L-aspartate binding. The interval 199-202 (QQYK) is aspartate. The L-aspartate site is built by arginine 221 and histidine 452. Residue 221–223 (RDE) participates in ATP binding. An ATP-binding site is contributed by glutamate 486. Arginine 493 is an L-aspartate binding site. Position 538-541 (538-541 (GVDR)) interacts with ATP.

This sequence belongs to the class-II aminoacyl-tRNA synthetase family. Type 1 subfamily. In terms of assembly, homodimer.

Its subcellular location is the cytoplasm. It carries out the reaction tRNA(Asx) + L-aspartate + ATP = L-aspartyl-tRNA(Asx) + AMP + diphosphate. Its function is as follows. Aspartyl-tRNA synthetase with relaxed tRNA specificity since it is able to aspartylate not only its cognate tRNA(Asp) but also tRNA(Asn). Reaction proceeds in two steps: L-aspartate is first activated by ATP to form Asp-AMP and then transferred to the acceptor end of tRNA(Asp/Asn). The polypeptide is Aspartate--tRNA(Asp/Asn) ligase (Novosphingobium aromaticivorans (strain ATCC 700278 / DSM 12444 / CCUG 56034 / CIP 105152 / NBRC 16084 / F199)).